The chain runs to 342 residues: Ribosomal RNA small subunit methyltransferase H (342 aa).

S-adenosyl-L-methionine contacts are provided by residues Gly36–His38, Asp56, Phe82, Asp100, and Gln107. The segment at Gly311–Ala342 is disordered.

It belongs to the methyltransferase superfamily. RsmH family.

It is found in the cytoplasm. The enzyme catalyses cytidine(1402) in 16S rRNA + S-adenosyl-L-methionine = N(4)-methylcytidine(1402) in 16S rRNA + S-adenosyl-L-homocysteine + H(+). Functionally, specifically methylates the N4 position of cytidine in position 1402 (C1402) of 16S rRNA. In Xanthomonas axonopodis pv. citri (strain 306), this protein is Ribosomal RNA small subunit methyltransferase H.